We begin with the raw amino-acid sequence, 660 residues long: Epithelial sodium channel subunit gamma (660 aa).

Residues 1–55 (MSKSGKKLTQKLKKNLPVTGPQAPTLYELMQWYCLNTNTHGCRRIVVSKGRLRRW) lie on the Cytoplasmic side of the membrane. A helical membrane pass occupies residues 56–76 (IWISLTLCAVAVIFWQCALLL). The Extracellular segment spans residues 77 to 537 (MSYYSVSASI…VTLLSNFGGQ (461 aa)). 8 disulfide bridges follow: C101/C286, C209/C217, C263/C270, C375/C460, C397/C456, C401/C452, C410/C437, and C412/C426. The helical transmembrane segment at 538-558 (LGLWMSCSMICVLEIIEVFFI) threads the bilayer. Residues 559-660 (DSFWVVLRQR…IDSDEDVERL (102 aa)) are Cytoplasmic-facing.

The protein belongs to the amiloride-sensitive sodium channel (TC 1.A.6) family. SCNN1G subfamily. Component of the heterotrimeric epithelial sodium channel (ENaC) composed of an alpha/SCNN1A, a beta/SCNN1B and a gamma/SCNN1G subunit.

It is found in the apical cell membrane. The catalysed reaction is Na(+)(in) = Na(+)(out). Originally identified and characterized by its inhibition by the diuretic drug amiloride. This is one of the three pore-forming subunits of the heterotrimeric epithelial sodium channel (ENaC), a critical regulator of sodium balance and fluid homeostasis. ENaC operates in epithelial tissues, where it mediates the electrodiffusion of sodium ions from extracellular fluid through the apical membrane of cells, with water following osmotically. This chain is Epithelial sodium channel subunit gamma (scnn1g-a), found in Xenopus laevis (African clawed frog).